The sequence spans 470 residues: Uronate isomerase (470 aa).

The protein belongs to the metallo-dependent hydrolases superfamily. Uronate isomerase family.

It catalyses the reaction D-glucuronate = D-fructuronate. It carries out the reaction aldehydo-D-galacturonate = keto-D-tagaturonate. Its pathway is carbohydrate metabolism; pentose and glucuronate interconversion. The sequence is that of Uronate isomerase from Salmonella paratyphi A (strain ATCC 9150 / SARB42).